The chain runs to 479 residues: Ribosomal RNA small subunit methyltransferase F (479 aa).

Residues 125 to 131, Glu149, Asp176, and Asp194 each bind S-adenosyl-L-methionine; that span reads AAAPGSK. Residue Cys247 is the Nucleophile of the active site.

The protein belongs to the class I-like SAM-binding methyltransferase superfamily. RsmB/NOP family.

It is found in the cytoplasm. It carries out the reaction cytidine(1407) in 16S rRNA + S-adenosyl-L-methionine = 5-methylcytidine(1407) in 16S rRNA + S-adenosyl-L-homocysteine + H(+). Functionally, specifically methylates the cytosine at position 1407 (m5C1407) of 16S rRNA. This is Ribosomal RNA small subunit methyltransferase F from Salmonella paratyphi C (strain RKS4594).